A 379-amino-acid polypeptide reads, in one-letter code: Stimulator of interferon genes protein (379 aa).

The Cytoplasmic segment spans residues 1 to 17; the sequence is MPHSSLHPSIPCPRGHG. The interval 1–190 is mediates interaction with ZDHHC1 and ZDHHC11; the sequence is MPHSSLHPSI…TYNQHYNNLL (190 aa). The chain crosses the membrane as a helical span at residues 18–34; it reads AQKAALVLLSACLVTLW. Lys20 is covalently cross-linked (Glycyl lysine isopeptide (Lys-Gly) (interchain with G-Cter in ubiquitin)). Over 35–44 the chain is Lumenal; that stretch reads GLGEPPEHTL. A helical transmembrane segment spans residues 45–69; that stretch reads RYLVLHLASLQLGLLLNGVCSLAEE. Over 70-91 the chain is Cytoplasmic; sequence LRHIHSRYRGSYWRTVRACLGC. S-palmitoyl cysteine attachment occurs at residues Cys88 and Cys91. Residues 92 to 106 traverse the membrane as a helical segment; it reads PLRRGALLLLSIYFY. Over 107–116 the chain is Lumenal; it reads YSLPNAVGPP. The chain crosses the membrane as a helical span at residues 117 to 134; the sequence is FTWMLALLGLSQALNILL. Topologically, residues 135–379 are cytoplasmic; it reads GLKGLAPAEI…KPLPLRTDFS (245 aa). Residue Lys150 forms a Glycyl lysine isopeptide (Lys-Gly) (interchain with G-Cter in ubiquitin) linkage. A cyclic dinucleotide-binding domain (CBD) region spans residues 153–340; that stretch reads FNVAHGLAWS…RHLRQEEKEE (188 aa). Residues Ser162 and Tyr167 each contribute to the 2',3'-cGAMP site. The 3',3'-c-di-GMP site is built by Ser162 and Tyr167. A 2',3'-cUAMP-binding site is contributed by Tyr167. Thr229 is subject to Phosphothreonine. Residue Lys236 forms a Glycyl lysine isopeptide (Lys-Gly) (interchain with G-Cter in ubiquitin) linkage. Position 238 (Arg238) interacts with 2',3'-cGAMP. Residue Arg238 participates in 2',3'-cUAMP binding. Residues 238 to 241 and Thr263 contribute to the 3',3'-c-di-GMP site; that span reads RVYS. Ser241 is modified (phosphoserine). Thr263 is a 2',3'-cGAMP binding site. Thr263 lines the 2',3'-cUAMP pocket. Lys338 participates in a covalent cross-link: Glycyl lysine isopeptide (Lys-Gly) (interchain with G-Cter in SUMO). The C-terminal tail (CTT) stretch occupies residues 340 to 379; it reads EVTVGSLKTSAVPSTSTMSQEPELLISGMEKPLPLRTDFS. A disordered region spans residues 341-370; the sequence is VTVGSLKTSAVPSTSTMSQEPELLISGMEK. Polar residues predominate over residues 345-359; sequence SLKTSAVPSTSTMSQ. The residue at position 354 (Thr354) is a Phosphothreonine. Ser355 is modified (phosphoserine; by MAP3K7). Residue Thr356 is modified to Phosphothreonine. Residues Ser358 and Ser366 each carry the phosphoserine; by TBK1 modification. Positions 363–366 match the pLxIS motif motif; sequence LLIS.

Belongs to the STING family. As to quaternary structure, homodimer; forms a homodimer in absence of cyclic nucleotide (c-di-GMP or cGAMP); 'Lys-63'-linked ubiquitination at Lys-150 is required for homodimerization. Homotetramer; in presence of cyclic nucleotide (c-di-GMP or cGAMP), forms tetramers and higher-order oligomers through side-by-side packing. Interacts (when phosphorylated) with IRF3; following activation and phosphorylation on the pLxIS motif by TBK1, recruits IRF3. Interacts with RIGI, MAVS and SSR2. Interacts with RNF5 and TRIM56. Interacts with TBK1; when homodimer, leading to subsequent production of IFN-beta. Interacts with IFIT1 and IFIT2. Interacts with TRIM29; this interaction induces STING1 ubiquitination and subsequent degradation. Associates with the MHC-II complex. Interacts with STEEP1; interaction takes place upon cGAMP-activation and STING1 phosphorylation by MAP3K7/TAK1 and promotes STING1 translocation to COPII vesicles. Interacts with SEC24A, SEC24B, and SEC24C; promoting translocation to COPII vesicles. Interacts (when ubiquitinated) with SQSTM1; leading to relocalization to autophagosomes. Interacts with SURF4. Interacts with HNRNPA2B1. Interacts with ZDHHC1; ZDHHC1 constitutively interacts with STING1 and in presence of DNA viruses activates it by promoting its cGAMP-induced oligomerization and the recruitment of downstream signaling components. Interacts with ZDHHC11; in presence of DNA viruses promotes the recruitment of IRF3 to STING1. Interacts with TOMM70. Interacts with isoform IFI16-beta of IFI16. Interacts with TAB1; promoting recruitment of TAB1 to the endoplasmic reticulum membrane and subsequent activation of MAP3K7/TAK1. Interacts (via transmembrane domain) with TMEM203. Interacts with DDX41. Interacts with TMEM120A (via C-terminal domain); regulates the trafficking of STING1 from the ER to the ER-Golgi intermediate compartment to elicit antiviral effects. (Microbial infection) Interacts with human papillomavirus (HPV) protein E7. In terms of assembly, (Microbial infection) Interacts with adenovirus early E1A protein. As to quaternary structure, (Microbial infection) Interacts with herpes simplex virus 1 protein ICP34.5; this interaction inhibits the intracellular DNA sensing pathway. (Microbial infection) Interacts with Chikungunya virus non-structural protein 1; this interaction results in inhibition of cGAS-STING signaling and increased levels of palmitoylated nsP1 and protein stabilization. In terms of assembly, (Microbial infection) Interacts with human cytomegalovirus proteins UL94, UL42 and UL138; these interactions result in the inhibition of cGAS-STING signaling. As to quaternary structure, (Microbial infection) Interacts with varivella virus protein 39; this interaction results in the inhibition of cGAS-STING signaling. Phosphorylation by TBK1 leads to activation and production of IFN-beta. Following cyclic nucleotide (c-di-GMP or cGAMP)-binding, activation and translocation from the endoplasmic reticulum, STING1 is phosphorylated by TBK1 at Ser-366 in the pLxIS motif. The phosphorylated pLxIS motif constitutes an IRF3-binding motif, leading to recruitment of the transcription factor IRF3 to induce type-I interferons and other cytokines. The phosphorylated pLxIS motif facilitates SENP2 recruitment during late phase of viral infection. Phosphorylated on tyrosine residues upon MHC-II aggregation. Dephosphorylation by PPP6C leads to inactivation and decreased production of IFN-beta. Phosphorylation at Ser-358 is also required to activate IRF3. Phosphorylation at Ser-355 by MAP3K7/TAK1 facilitates its interaction with STEEP1, promoting STING1 translocation to COPII vesicles. In terms of processing, ubiquitinated. Ubiquitinated via 'Lys-63'-linked ubiquitin chains in response to double-stranded DNA treatment, leading to relocalization to autophagosomes and subsequent degradation; this process is dependent on SQSTM1. 'Lys-63'-linked ubiquitination mediated by TRIM56 at Lys-150 promotes homodimerization and recruitment of the antiviral kinase TBK1 and subsequent production of IFN-beta. 'Lys-48'-linked polyubiquitination at Lys-150 occurring after viral infection is mediated by RNF5 and leads to proteasomal degradation. 'Lys-11'-linked polyubiquitination at Lys-150 by RNF26 leads to stabilize STING1: it protects STING1 from RNF5-mediated 'Lys-48'-linked polyubiquitination. 'Lys-33'-linked and 'Lys-48'-linked deubiquitinated by USP20; leading to its stabilization and promotion of innate antiviral response. 'Lys-48'-linked deubiquitinated by USP44; leading to its stabilization and promotion of innate antiviral response. Deubiquitinated by USP13; leading to inhibition of innate antiviral response. 'Lys-63'-linked deubiquitinated by USP49; leading to inhibition of the subsequent recruitment of TBK1 to the signaling complex. 'Lys-63'-linked ubiquitination mediated by RNF39 promotes the activation of the cGAS-STING pathway. MARCHF5-mediated ubiquitination prevents the oxidation-induced polymer formation. Post-translationally, (Microbial infection) Deubiquitinated by Epstein-Barr virus BPLF1 on both 'Lys-48' and 'Lys-63'-linked ubiquitin chains; leading to inhibition of cGAS-STING signaling. Sumoylated at Lys-338 by TRIM38 during the early phase of viral infection, promoting its stability by preventing its relocalization to autophagosomes and subsequent degradation. Desumoylated by SENP2 during the late phase of viral infection. In terms of processing, palmitoylation takes place in the Golgi apparatus and creates a platform for the recruitment of TBK1. Ubiquitously expressed. Expressed in skin endothelial cells, alveolar type 2 pneumocytes, bronchial epithelium and alveolar macrophages.

It is found in the endoplasmic reticulum membrane. The protein localises to the cytoplasm. Its subcellular location is the perinuclear region. The protein resides in the endoplasmic reticulum-Golgi intermediate compartment membrane. It localises to the golgi apparatus membrane. It is found in the cytoplasmic vesicle. The protein localises to the autophagosome membrane. Its subcellular location is the mitochondrion outer membrane. The protein resides in the cell membrane. It carries out the reaction H(+)(in) = H(+)(out). Activated upon binding to the hydrolysis-resistant 2'3'-cG(s)A(s)MP, an analog of cGAMP, in which phosphodiester linkages are replaced by phosphothioate linkages. Specifically inhibited by small-molecule H-151 (N-(4-ethylphenyl)-N'-1H-indol-3-yl-urea), which covalently binds Cys-91 and prevents palmitoylation and subsequent activation of STING1. In contrast to mouse protein, not activated by anticancer molecule 5,6-dimethylxanthenone 4-acetic acid (DMXAA). Inhibited by compound 18 ([(3S,4S)-2-(4-tert-butyl-3-chlorophenyl)-3-(2,3-dihydro-1,4-benzodioxin-6-yl)-7-fluoro-1-oxo-1,2,3,4-tetrahydroisoquinolin-4-yl]acetate), a competitive inhibitor with slow dissociation kinetics and good oral bioavailability. Homooligomerization and ability to promote the production of type I interferons is activated by C53, a small benzothiazinone-like compound that binds to the transmembrane regions. in the area of the putative pore. In contrast, compound C53, directly inhibits the proton channel activity and facilitate MAP1LC3B/LC3B lipidation and autophagosome formation. Facilitator of innate immune signaling that acts as a sensor of cytosolic DNA from bacteria and viruses and promotes the production of type I interferon (IFN-alpha and IFN-beta). Innate immune response is triggered in response to non-CpG double-stranded DNA from viruses and bacteria delivered to the cytoplasm. Acts by binding cyclic dinucleotides: recognizes and binds cyclic di-GMP (c-di-GMP), a second messenger produced by bacteria, cyclic UMP-AMP (2',3'-cUAMP), and cyclic GMP-AMP (cGAMP), a messenger produced by CGAS in response to DNA virus in the cytosol. Upon binding to c-di-GMP, cUAMP or cGAMP, STING1 oligomerizes, translocates from the endoplasmic reticulum and is phosphorylated by TBK1 on the pLxIS motif, leading to recruitment and subsequent activation of the transcription factor IRF3 to induce expression of type I interferon and exert a potent anti-viral state. Exhibits 2',3' phosphodiester linkage-specific ligand recognition: can bind both 2'-3' linked cGAMP (2'-3'-cGAMP) and 3'-3' linked cGAMP but is preferentially activated by 2'-3' linked cGAMP. The preference for 2'-3'-cGAMP, compared to other linkage isomers is probably due to the ligand itself, whichs adopts an organized free-ligand conformation that resembles the STING1-bound conformation and pays low energy costs in changing into the active conformation. In addition to promote the production of type I interferons, plays a direct role in autophagy. Following cGAMP-binding, STING1 buds from the endoplasmic reticulum into COPII vesicles, which then form the endoplasmic reticulum-Golgi intermediate compartment (ERGIC). The ERGIC serves as the membrane source for WIPI2 recruitment and LC3 lipidation, leading to formation of autophagosomes that target cytosolic DNA or DNA viruses for degradation by the lysosome. Promotes autophagy by acting as a proton channel that directs proton efflux from the Golgi to facilitate MAP1LC3B/LC3B lipidation. The autophagy- and interferon-inducing activities can be uncoupled and autophagy induction is independent of TBK1 phosphorylation. Autophagy is also triggered upon infection by bacteria: following c-di-GMP-binding, which is produced by live Gram-positive bacteria, promotes reticulophagy. May be involved in translocon function, the translocon possibly being able to influence the induction of type I interferons. May be involved in transduction of apoptotic signals via its association with the major histocompatibility complex class II (MHC-II). Functionally, (Microbial infection) Antiviral activity is antagonized by oncoproteins, such as papillomavirus (HPV) protein E7 and adenovirus early E1A protein. Such oncoproteins prevent the ability to sense cytosolic DNA. The protein is Stimulator of interferon genes protein of Homo sapiens (Human).